A 209-amino-acid polypeptide reads, in one-letter code: Small ribosomal subunit protein uS4 (209 aa).

A disordered region spans residues 23–46 (SRNPLLKKPHPPGQHGMQRKKKSD). Positions 93–153 (CRLDNMVYRM…EKSKRLQSVK (61 aa)) constitute an S4 RNA-binding domain.

Belongs to the universal ribosomal protein uS4 family. Part of the 30S ribosomal subunit. Contacts protein S5. The interaction surface between S4 and S5 is involved in control of translational fidelity.

In terms of biological role, one of the primary rRNA binding proteins, it binds directly to 16S rRNA where it nucleates assembly of the body of the 30S subunit. Functionally, with S5 and S12 plays an important role in translational accuracy. This Chlamydia pneumoniae (Chlamydophila pneumoniae) protein is Small ribosomal subunit protein uS4.